The chain runs to 204 residues: CASP-like protein 2U2 (204 aa).

Over 1 to 36 (MGVLGGDAHVPIGSQVSPGSVVVTNNESFGHRKLLK) the chain is Cytoplasmic. A helical membrane pass occupies residues 37 to 57 (GVDFLVRIKAFAFCLAVIVLL). Over 58–84 (KNNVQTTVIAPGIVLQAKYNNTKAPVS) the chain is Extracellular. N77 carries an N-linked (GlcNAc...) asparagine glycan. Residues 85–105 (LLVLASICCGYAFLQAVVSLL) form a helical membrane-spanning segment. Topologically, residues 106–117 (SFIRDKRVLNNT) are cytoplasmic. A helical transmembrane segment spans residues 118-138 (VLAWLTFLLDQVLTYLLLGSA). The Extracellular segment spans residues 139-170 (AATAEAAYIAKRGEDKVQWKAVCGPFKRFCDH). The chain crosses the membrane as a helical span at residues 171-191 (FAATVFLSFIAVIAFAVSAAI). Residues 192-204 (SAYYLFRKSKGFK) are Cytoplasmic-facing.

Belongs to the Casparian strip membrane proteins (CASP) family. In terms of assembly, homodimer and heterodimers.

The protein localises to the cell membrane. This is CASP-like protein 2U2 from Selaginella moellendorffii (Spikemoss).